The sequence spans 219 residues: Putative germin-like protein 8-1 (219 aa).

Positions 1–23 (MASFISFLLLAALIGMASWQAIA) are cleaved as a signal peptide. A disulfide bridge connects residues Cys-33 and Cys-48. N-linked (GlcNAc...) asparagine glycosylation is found at Asn-53 and Asn-79. One can recognise a Cupin type-1 domain in the interval 63–215 (AMLDKPRDTA…AFQVDKKIID (153 aa)). Mn(2+) contacts are provided by His-112, His-114, Glu-119, and His-160.

The protein belongs to the germin family. In terms of assembly, oligomer (believed to be a pentamer but probably hexamer).

Its subcellular location is the secreted. The protein localises to the extracellular space. The protein resides in the apoplast. In terms of biological role, plays a role in broad-spectrum disease resistance. Probably has no oxalate oxidase activity even if the active site is conserved. The protein is Putative germin-like protein 8-1 of Oryza sativa subsp. japonica (Rice).